A 233-amino-acid polypeptide reads, in one-letter code: Small ribosomal subunit protein uS2c (233 aa).

The protein belongs to the universal ribosomal protein uS2 family.

The protein resides in the plastid. Its subcellular location is the apicoplast. This chain is Small ribosomal subunit protein uS2c, found in Toxoplasma gondii.